The primary structure comprises 91 residues: Small ribosomal subunit protein bS16 (91 aa).

It belongs to the bacterial ribosomal protein bS16 family.

The sequence is that of Small ribosomal subunit protein bS16 from Enterococcus faecalis (strain ATCC 700802 / V583).